A 712-amino-acid chain; its full sequence is Semaphorin-1A (712 aa).

An N-terminal signal peptide occupies residues 1–20 (MVVKILVWSICLIALCHAWM). The Sema domain maps to 21–483 (PDSSSKLINH…GKDEIRLANL (463 aa)). The Extracellular segment spans residues 21–601 (PDSSSKLINH…IGGCAVRQQL (581 aa)). Residues Asn-42 and Asn-69 are each glycosylated (N-linked (GlcNAc...) asparagine). Cystine bridges form between Cys-95-Cys-105 and Cys-123-Cys-132. 2 N-linked (GlcNAc...) asparagine glycosylation sites follow: Asn-161 and Asn-265. 4 disulfide bridges follow: Cys-242-Cys-357, Cys-266-Cys-316, Cys-486-Cys-503, and Cys-495-Cys-512. The helical transmembrane segment at 602–622 (VIYTAGTLHIVVVVVSIVGLF) threads the bilayer. The Cytoplasmic portion of the chain corresponds to 623 to 712 (SWLYSGLSVF…TLQKIKKTYI (90 aa)).

Belongs to the semaphorin family.

Its subcellular location is the membrane. Plays a role in growth cones guidance. This is Semaphorin-1A (SEMA-1A) from Tribolium confusum (Confused flour beetle).